The chain runs to 372 residues: Probable leucine aminopeptidase MCYG_03459 (372 aa).

The N-terminal stretch at 1–18 (MKISTLAVVSAFAVTAIA) is a signal peptide. Residue asparagine 95 is glycosylated (N-linked (GlcNAc...) asparagine). Zn(2+) is bound by residues histidine 175 and aspartate 194. N-linked (GlcNAc...) asparagine glycans are attached at residues asparagine 195 and asparagine 219. 2 residues coordinate Zn(2+): glutamate 233 and aspartate 260. Cysteine 305 and cysteine 309 are disulfide-bonded. Residue histidine 338 participates in Zn(2+) binding.

Belongs to the peptidase M28 family. M28E subfamily. In terms of assembly, monomer. Requires Zn(2+) as cofactor.

The protein localises to the secreted. Its function is as follows. Probable extracellular aminopeptidase which contributes to pathogenicity. The protein is Probable leucine aminopeptidase MCYG_03459 of Arthroderma otae (strain ATCC MYA-4605 / CBS 113480) (Microsporum canis).